A 280-amino-acid polypeptide reads, in one-letter code: Diaminopimelate epimerase (280 aa).

Substrate contacts are provided by Asn13 and Asn66. The active-site Proton donor is the Cys75. Residues 76–77, Asn162, Asn195, and 213–214 each bind substrate; these read GN and ER. Cys222 (proton acceptor) is an active-site residue. Position 223 to 224 (223 to 224) interacts with substrate; it reads GT.

This sequence belongs to the diaminopimelate epimerase family. As to quaternary structure, homodimer.

The protein localises to the cytoplasm. It catalyses the reaction (2S,6S)-2,6-diaminopimelate = meso-2,6-diaminopimelate. It functions in the pathway amino-acid biosynthesis; L-lysine biosynthesis via DAP pathway; DL-2,6-diaminopimelate from LL-2,6-diaminopimelate: step 1/1. In terms of biological role, catalyzes the stereoinversion of LL-2,6-diaminopimelate (L,L-DAP) to meso-diaminopimelate (meso-DAP), a precursor of L-lysine and an essential component of the bacterial peptidoglycan. The chain is Diaminopimelate epimerase from Synechococcus elongatus (strain ATCC 33912 / PCC 7942 / FACHB-805) (Anacystis nidulans R2).